Consider the following 240-residue polypeptide: Small ribosomal subunit protein uS2c (240 aa).

It belongs to the universal ribosomal protein uS2 family.

The protein localises to the plastid. The protein resides in the chloroplast. The polypeptide is Small ribosomal subunit protein uS2c (rps2) (Euglena gracilis).